The following is a 113-amino-acid chain: MAGYRKLGRPTDQRKAMLRNLVTSFLKHGKIETTETRAKETRSIAEKMITLAKRGDLHARRQVLSFVTEEAVVQRLFEEIAPKYAERNGGYTRIYKVGPRRGDGAEVVILELV.

This sequence belongs to the bacterial ribosomal protein bL17 family. In terms of assembly, part of the 50S ribosomal subunit. Contacts protein L32.

In Clostridium botulinum (strain Loch Maree / Type A3), this protein is Large ribosomal subunit protein bL17.